The following is a 502-amino-acid chain: Lysine--tRNA ligase (502 aa).

Mg(2+) contacts are provided by E398 and E405.

It belongs to the class-II aminoacyl-tRNA synthetase family. As to quaternary structure, homodimer. Mg(2+) is required as a cofactor.

It is found in the cytoplasm. The enzyme catalyses tRNA(Lys) + L-lysine + ATP = L-lysyl-tRNA(Lys) + AMP + diphosphate. The sequence is that of Lysine--tRNA ligase from Thermosipho africanus (strain TCF52B).